The sequence spans 553 residues: Keratin, type II cytoskeletal 73 (553 aa).

The head stretch occupies residues 1 to 130 (MNRQFTCKSG…DPEIQKVRAQ (130 aa)). The coil 1A stretch occupies residues 131–166 (EREQIKALNNKFASFIDKVRFLEQQNQVLQTKWELL). The 314-residue stretch at 131-444 (EREQIKALNN…KLLEGEECRM (314 aa)) folds into the IF rod domain. Residues 167-185 (QQLDLSNCRRNLEPVYEAH) are linker 1. The coil 1B stretch occupies residues 186-277 (ISSLQKQLDS…CLYEGEITQM (92 aa)). Residues 278–301 (QSHISDTSVVLSMDNNRNLDLDSI) are linker 12. The coil 2 stretch occupies residues 302–440 (IAEVRAQYED…ATYRKLLEGE (139 aa)). Residues 441–539 (ECRMSGEHTN…LGSPSKKTMR (99 aa)) form a tail region.

This sequence belongs to the intermediate filament family. As to quaternary structure, heterotetramer of two type I and two type II keratins.

Its function is as follows. Has a role in hair formation. Specific component of keratin intermediate filaments in the inner root sheath (IRS) of the hair follicle. The protein is Keratin, type II cytoskeletal 73 (Krt73) of Rattus norvegicus (Rat).